We begin with the raw amino-acid sequence, 213 residues long: Orotate phosphoribosyltransferase (213 aa).

A 5-phospho-alpha-D-ribose 1-diphosphate-binding site is contributed by lysine 26. Phenylalanine 34–phenylalanine 35 lines the orotate pocket. 5-phospho-alpha-D-ribose 1-diphosphate-binding positions include tyrosine 72 to lysine 73, arginine 99, lysine 100, lysine 103, histidine 105, and aspartate 124 to alanine 132. The orotate site is built by threonine 128 and arginine 156.

Belongs to the purine/pyrimidine phosphoribosyltransferase family. PyrE subfamily. As to quaternary structure, homodimer. Requires Mg(2+) as cofactor.

It carries out the reaction orotidine 5'-phosphate + diphosphate = orotate + 5-phospho-alpha-D-ribose 1-diphosphate. Its pathway is pyrimidine metabolism; UMP biosynthesis via de novo pathway; UMP from orotate: step 1/2. Its function is as follows. Catalyzes the transfer of a ribosyl phosphate group from 5-phosphoribose 1-diphosphate to orotate, leading to the formation of orotidine monophosphate (OMP). In Serratia proteamaculans (strain 568), this protein is Orotate phosphoribosyltransferase.